The sequence spans 174 residues: Ribosomal RNA large subunit methyltransferase H (174 aa).

Residues Leu-90, Gly-122, and 141–146 (LGELTW) contribute to the S-adenosyl-L-methionine site.

It belongs to the RNA methyltransferase RlmH family. In terms of assembly, homodimer.

The protein resides in the cytoplasm. The catalysed reaction is pseudouridine(1915) in 23S rRNA + S-adenosyl-L-methionine = N(3)-methylpseudouridine(1915) in 23S rRNA + S-adenosyl-L-homocysteine + H(+). In terms of biological role, specifically methylates the pseudouridine at position 1915 (m3Psi1915) in 23S rRNA. This is Ribosomal RNA large subunit methyltransferase H from Brucella melitensis biotype 2 (strain ATCC 23457).